Reading from the N-terminus, the 123-residue chain is NADH-quinone oxidoreductase subunit A (123 aa).

3 helical membrane passes run 6 to 26 (LTPYLPLAVVLLLAGGMAMLI), 66 to 86 (VVALLFIVFDVEAVFLYPWAV), and 93 to 113 (WFGYVEMLVFAVTLVVGLIYI).

It belongs to the complex I subunit 3 family. In terms of assembly, NDH-1 is composed of 14 different subunits. Subunits NuoA, H, J, K, L, M, N constitute the membrane sector of the complex.

The protein resides in the cell inner membrane. The enzyme catalyses a quinone + NADH + 5 H(+)(in) = a quinol + NAD(+) + 4 H(+)(out). In terms of biological role, NDH-1 shuttles electrons from NADH, via FMN and iron-sulfur (Fe-S) centers, to quinones in the respiratory chain. The immediate electron acceptor for the enzyme in this species is believed to be ubiquinone. Couples the redox reaction to proton translocation (for every two electrons transferred, four hydrogen ions are translocated across the cytoplasmic membrane), and thus conserves the redox energy in a proton gradient. In Myxococcus xanthus (strain DK1622), this protein is NADH-quinone oxidoreductase subunit A.